The following is a 199-amino-acid chain: NAD(P)H dehydrogenase (quinone) (199 aa).

The Flavodoxin-like domain maps to 4–190 (VLVLYYSAYG…AGARYQGKTI (187 aa)). FMN-binding positions include 10–15 (SAYGHI) and 78–80 (TRF). Y12 contacts NAD(+). A substrate-binding site is contributed by W98. FMN is bound by residues 113–119 (STATQHG) and H134.

Belongs to the WrbA family. FMN is required as a cofactor.

The enzyme catalyses a quinone + NADH + H(+) = a quinol + NAD(+). It catalyses the reaction a quinone + NADPH + H(+) = a quinol + NADP(+). The polypeptide is NAD(P)H dehydrogenase (quinone) (Rhodopseudomonas palustris (strain BisB5)).